A 774-amino-acid polypeptide reads, in one-letter code: E3 ubiquitin-protein ligase RFWD3 (774 aa).

Disordered regions lie at residues 32–126 (GTIE…TAGA) and 203–281 (PYPL…SAME). Ser-59 and Ser-75 each carry phosphoserine; by ATM and ATR. The segment covering 92-103 (LTEEVQPSEENM) has biased composition (acidic residues). Polar residues predominate over residues 108 to 121 (PGTSEEPSQGSGAN). The span at 223–242 (SDSDGSAEDEEVVVQAEEPE) shows a compositional bias: acidic residues. An RING-type; degenerate zinc finger spans residues 288 to 332 (CTICLEQWTNAGDHRISALRCGHLFGFRCISKWLKGQTRKCPQCN). Residues 358-403 (RMKSDLLNEQMLRKQAELESAQCRLQLQVLIDKCTKLNSRVQDLEK) are a coiled coil. WD repeat units follow at residues 493-535 (IPMH…VVQT), 536-568 (YNTGRPVWSCCWCLDENNYVYAGLASGSILIYD), and 583-628 (KARC…SHKP).

As to quaternary structure, interacts with MDM2 and p53/TP53. Binds to the RPA complex via direct interaction with RPA2. Interacts with RAD51. In terms of processing, phosphorylated at Ser-59 and Ser-75 upon DNA damage by ATM or ATR. ATM phosphorylation occurs at early times upon DNA damage, while ATR is the major kinase at later times. Phosphorylation by ATM and ATR is required to stabilize p53/TP53. Part of the phosphorylation depends upon RPA2 presence.

The protein resides in the nucleus. It is found in the PML body. It localises to the cytoplasm. The enzyme catalyses S-ubiquitinyl-[E2 ubiquitin-conjugating enzyme]-L-cysteine + [acceptor protein]-L-lysine = [E2 ubiquitin-conjugating enzyme]-L-cysteine + N(6)-ubiquitinyl-[acceptor protein]-L-lysine.. Its pathway is protein modification; protein ubiquitination. In terms of biological role, E3 ubiquitin-protein ligase required for the repair of DNA interstrand cross-links (ICL) in response to DNA damage. Plays a key role in RPA-mediated DNA damage signaling and repair. Acts by mediating ubiquitination of the RPA complex (RPA1, RPA2 and RPA3 subunits) and RAD51 at stalled replication forks, leading to remove them from DNA damage sites and promote homologous recombination. Also mediates the ubiquitination of p53/TP53 in the late response to DNA damage, and acts as a positive regulator of p53/TP53 stability, thereby regulating the G1/S DNA damage checkpoint. May act by catalyzing the formation of short polyubiquitin chains on p53/TP53 that are not targeted to the proteasome. In response to ionizing radiation, interacts with MDM2 and enhances p53/TP53 ubiquitination, possibly by restricting MDM2 from extending polyubiquitin chains on ubiquitinated p53/TP53. Required to translesion DNA synthesis across DNA-protein cross-link adducts by catalyzing ubiquitination of proteins on single-stranded DNA (ssDNA). In Mus musculus (Mouse), this protein is E3 ubiquitin-protein ligase RFWD3 (Rfwd3).